We begin with the raw amino-acid sequence, 254 residues long: Alcohol dehydrogenase 2 (254 aa).

10-33 (FVAGLGGIGFDTSREIVKSGPKNL) serves as a coordination point for NAD(+). Serine 138 contributes to the substrate binding site. The active-site Proton acceptor is the tyrosine 151.

Belongs to the short-chain dehydrogenases/reductases (SDR) family. Homodimer.

It catalyses the reaction a primary alcohol + NAD(+) = an aldehyde + NADH + H(+). The enzyme catalyses a secondary alcohol + NAD(+) = a ketone + NADH + H(+). The polypeptide is Alcohol dehydrogenase 2 (Adh2) (Drosophila buzzatii (Fruit fly)).